A 340-amino-acid chain; its full sequence is Armadillo repeat-containing protein 12 (340 aa).

The interval 1 to 101 is interaction with TBC1D15; sequence MGKTIPRFLE…NITRCVYLLE (101 aa). ARM repeat units lie at residues 100–139, 179–218, and 278–318; these read LEAE…AFSG, LPDY…YLAQ, and SLHE…SLQC. The interval 321-340 is disordered; the sequence is DLGSRPSSCRPSHSCFKTGK. A compositionally biased stretch (low complexity) spans 324 to 340; the sequence is SRPSSCRPSHSCFKTGK.

In terms of assembly, interacts with TBC1D15, TBC1D21, GK2 and IMMT. Interacts with VDAC2 and VDAC3 in a TBC1D21-dependent manner. Interacts (via ARM domains) with RBBP4. As to expression, testis-specific.

It localises to the nucleus. Its subcellular location is the mitochondrion outer membrane. Functionally, essential for male fertility and sperm mitochondrial sheath formation. Required for proper mitochondrial elongation and coiling along the flagellum during the formation of the mitochondrial sheath. Facilitates the growth and aggressiveness of neuroblastoma cells. Increases the EZH2 activity and H3K27me3 levels in a RBBP4-dependent manner, and facilitates the enrichment of polycomb repressive complex 2 and H3K27me3 on gene promoters, resulting in transcriptional repression of tumor suppressors affecting the proliferation, invasion, and metastasis of tumor cells. In Mus musculus (Mouse), this protein is Armadillo repeat-containing protein 12 (Armc12).